A 499-amino-acid polypeptide reads, in one-letter code: Tektin-like protein 1 (499 aa).

Coiled coils occupy residues 197 to 227 (SMLT…LKTL) and 297 to 317 (LNEA…MAKN). A Phosphotyrosine modification is found at tyrosine 372.

In terms of assembly, microtubule inner protein component of sperm flagellar doublet microtubules.

It localises to the cytoplasm. Its subcellular location is the cytoskeleton. The protein localises to the flagellum axoneme. Functionally, microtubule inner protein (MIP) part of the dynein-decorated doublet microtubules (DMTs) in sperm flagellar axoneme, which is required for motile flagellum beating. Forms an extensive interaction network cross-linking the lumen of axonemal doublet microtubules. The sequence is that of Tektin-like protein 1 from Homo sapiens (Human).